A 548-amino-acid chain; its full sequence is MKKVTAMLFSMAVGLNAVSMAAKAKASEEQETDVLLIGGGIMSATLGTYLRELEPEWSMTMVERLEGVAQESSNGWNNAGTGHSALMELNYTPQNADGSISIEKAVAINEAFQISRQFWAHQVERGVLRTPRSFINTVPHMSFVWGEDNVNFLRARYAALQQSSLFRGMRYSEDHAQIKEWAPLVMEGRDPQQKVAATRTEIGTDVNYGEITRQLIASLQKKSNFSLQLSSEVRALKRNDDNTWTVTVADLKNGTAQNIRAKFVFIGAGGAALKLLQESGIPEAKDYAGFPVGGQFLVSENPDVVNHHLAKVYGKASVGAPPMSVPHIDTRVLDGKRVVLFGPFATFSTKFLKNGSLWDLMSSTTTSNVMPMMHVGLDNFDLVKYLVSQVMLSEEDRFEALKEYYPQAKKEDWRLWQAGQRVQIIKRDAEKGGVLRLGTEVVSDQQGTIAALLGASPGASTAAPIMLDLLEKVFGDRVSSPQWQATLKAIVPSYGRKLNGDVAATERELQYTSEVLGLKYDKPQAADSTPKPQLKPKPVQKEVADIAL.

Positions 521–548 (DKPQAADSTPKPQLKPKPVQKEVADIAL) are disordered. Basic and acidic residues predominate over residues 539–548 (VQKEVADIAL).

The protein belongs to the MQO family. It depends on FAD as a cofactor.

It carries out the reaction (S)-malate + a quinone = a quinol + oxaloacetate. Its pathway is carbohydrate metabolism; tricarboxylic acid cycle; oxaloacetate from (S)-malate (quinone route): step 1/1. The sequence is that of Probable malate:quinone oxidoreductase from Escherichia coli (strain ATCC 8739 / DSM 1576 / NBRC 3972 / NCIMB 8545 / WDCM 00012 / Crooks).